The primary structure comprises 444 residues: Phosphoglucosamine mutase (444 aa).

Residue serine 101 is the Phosphoserine intermediate of the active site. The Mg(2+) site is built by serine 101, aspartate 239, aspartate 241, and aspartate 243. Residue serine 101 is modified to Phosphoserine.

It belongs to the phosphohexose mutase family. Requires Mg(2+) as cofactor. Activated by phosphorylation.

The enzyme catalyses alpha-D-glucosamine 1-phosphate = D-glucosamine 6-phosphate. Catalyzes the conversion of glucosamine-6-phosphate to glucosamine-1-phosphate. This Alcanivorax borkumensis (strain ATCC 700651 / DSM 11573 / NCIMB 13689 / SK2) protein is Phosphoglucosamine mutase.